A 417-amino-acid polypeptide reads, in one-letter code: Serpin A9 (417 aa).

An N-terminal signal peptide occupies residues 1 to 23 (MASYLYGVLFAVGLCAPIYCVSP). 2 N-linked (GlcNAc...) asparagine glycosylation sites follow: Asn101 and Asn390.

The protein belongs to the serpin family. In terms of tissue distribution, highly expressed in normal germinal center (GC) B-cells and GC B-cell-derived malignancies.

It is found in the secreted. The protein resides in the cytoplasm. It localises to the membrane. Its function is as follows. Protease inhibitor that inhibits trypsin and trypsin-like serine proteases (in vitro). Inhibits plasmin and thrombin with lower efficiency (in vitro). This is Serpin A9 (SERPINA9) from Homo sapiens (Human).